We begin with the raw amino-acid sequence, 221 residues long: Probable glutathione S-transferase parC (221 aa).

The GST N-terminal domain occupies 4 to 83 (EEVILLDFWP…YIEEVWKDKA (80 aa)). Glutathione is bound by residues S14, K41, I55, and 67–68 (ES). The GST C-terminal domain maps to 90–214 (DPYDRAQARF…PKVLEFVKVL (125 aa)).

The protein belongs to the GST superfamily. Phi family. As to expression, abundant in seedlings and roots. It is also found in the shoot tips, flowers and leaves.

It carries out the reaction RX + glutathione = an S-substituted glutathione + a halide anion + H(+). Conjugation of reduced glutathione to a wide number of exogenous and endogenous hydrophobic electrophiles. The protein is Probable glutathione S-transferase parC (PARC) of Nicotiana tabacum (Common tobacco).